Reading from the N-terminus, the 38-residue chain is Photosystem II reaction center protein L (38 aa).

Residues 17-37 (SLFIGLLLVLVLALLFSSYFF) traverse the membrane as a helical segment.

The protein belongs to the PsbL family. In terms of assembly, PSII is composed of 1 copy each of membrane proteins PsbA, PsbB, PsbC, PsbD, PsbE, PsbF, PsbH, PsbI, PsbJ, PsbK, PsbL, PsbM, PsbT, PsbX, PsbY, PsbZ, Psb30/Ycf12, peripheral proteins PsbO, CyanoQ (PsbQ), PsbU, PsbV and a large number of cofactors. It forms dimeric complexes.

Its subcellular location is the cellular thylakoid membrane. One of the components of the core complex of photosystem II (PSII). PSII is a light-driven water:plastoquinone oxidoreductase that uses light energy to abstract electrons from H(2)O, generating O(2) and a proton gradient subsequently used for ATP formation. It consists of a core antenna complex that captures photons, and an electron transfer chain that converts photonic excitation into a charge separation. This subunit is found at the monomer-monomer interface and is required for correct PSII assembly and/or dimerization. This is Photosystem II reaction center protein L from Acaryochloris marina (strain MBIC 11017).